The sequence spans 440 residues: MESQQLSNYSPISHGSACASVTSKEVHTNQDPLDVSASKTEECEKASTKANSQQTTTPASSAVPENPHHASPQPASVPPPQNGPYPQQCMMTQNQANPSGWSFYGHPSMIPYTPYQMSPMYFPPGPQSQFPQYPSSVGTPLSTPSPESGNTFTDSSSADSDMTSTKKYVRPPPMLTSPNDFPNWVKTYIKFLQNSNLGGIIPTVNGKPVRQITDDELTFLYNTFQIFAPSQFLPTWVKDILSVDYTDIMKILSKSIEKMQSDTQEANDIVTLANLQYNGSTPADAFETKVTNIIDRLNNNGIHINNKVACQLIMRGLSGEYKFLRYTRHRHLNMTVAELFLDIHAIYEEQQGSRNSKPNYRRNLSDEKNDSRSYTNTTKPKVIARNPQKTNNSKSKTARAHNVSTSNNSPSTDNDSISKSTTEPIQLNNKHDLHLRPGTY.

3 stretches are compositionally biased toward polar residues: residues 1–23, 48–60, and 127–152; these read MESQ…SVTS, TKAN…TPAS, and QSQF…GNTF. Disordered regions lie at residues 1–93, 126–173, and 352–440; these read MESQ…MMTQ, PQSQ…RPPP, and GSRN…PGTY. Low complexity predominate over residues 153 to 165; sequence TDSSSADSDMTST. The tract at residues 299–401 is RNA-binding; that stretch reads NNGIHINNKV…NSKSKTARAH (103 aa). Residues 402–418 are compositionally biased toward low complexity; the sequence is NVSTSNNSPSTDNDSIS. Ser-416 is modified (phosphoserine). The span at 419–428 shows a compositional bias: polar residues; that stretch reads KSTTEPIQLN. The segment covering 429–440 has biased composition (basic and acidic residues); that stretch reads NKHDLHLRPGTY.

As to quaternary structure, homotrimer.

Its subcellular location is the cytoplasm. Functionally, capsid protein (CA) is the structural component of the virus-like particle (VLP), forming the shell that encapsulates the retrotransposons dimeric RNA genome. The particles are assembled from trimer-clustered units and there are holes in the capsid shells that allow for the diffusion of macromolecules. CA also has nucleocapsid-like chaperone activity, promoting primer tRNA(i)-Met annealing to the multipartite primer-binding site (PBS), dimerization of Ty1 RNA and initiation of reverse transcription. This is Transposon Ty1-PR3 Gag polyprotein (TY1A-PR3) from Saccharomyces cerevisiae (strain ATCC 204508 / S288c) (Baker's yeast).